Reading from the N-terminus, the 118-residue chain is Ribonuclease P protein component (118 aa).

The protein belongs to the RnpA family. As to quaternary structure, consists of a catalytic RNA component (M1 or rnpB) and a protein subunit.

The enzyme catalyses Endonucleolytic cleavage of RNA, removing 5'-extranucleotides from tRNA precursor.. In terms of biological role, RNaseP catalyzes the removal of the 5'-leader sequence from pre-tRNA to produce the mature 5'-terminus. It can also cleave other RNA substrates such as 4.5S RNA. The protein component plays an auxiliary but essential role in vivo by binding to the 5'-leader sequence and broadening the substrate specificity of the ribozyme. The sequence is that of Ribonuclease P protein component from Shewanella frigidimarina (strain NCIMB 400).